The following is an 85-amino-acid chain: Large ribosomal subunit protein bL27 (85 aa).

A disordered region spans residues 1-21 (MAHKKGGGTTRNGRDSESKRL).

It belongs to the bacterial ribosomal protein bL27 family.

The sequence is that of Large ribosomal subunit protein bL27 from Janthinobacterium sp. (strain Marseille) (Minibacterium massiliensis).